Here is a 328-residue protein sequence, read N- to C-terminus: DNA-directed RNA polymerase subunit alpha 1 (328 aa).

The segment at 1–234 (MQGFVKDFLK…GQLDEFVDER (234 aa)) is alpha N-terminal domain (alpha-NTD). The tract at residues 248-328 (FDPILLRPVN…NWPPASLIED (81 aa)) is alpha C-terminal domain (alpha-CTD).

The protein belongs to the RNA polymerase alpha chain family. As to quaternary structure, homodimer. The RNAP catalytic core consists of 2 alpha, 1 beta, 1 beta' and 1 omega subunit. When a sigma factor is associated with the core the holoenzyme is formed, which can initiate transcription.

The catalysed reaction is RNA(n) + a ribonucleoside 5'-triphosphate = RNA(n+1) + diphosphate. Its function is as follows. DNA-dependent RNA polymerase catalyzes the transcription of DNA into RNA using the four ribonucleoside triphosphates as substrates. The polypeptide is DNA-directed RNA polymerase subunit alpha 1 (Psychromonas ingrahamii (strain DSM 17664 / CCUG 51855 / 37)).